The primary structure comprises 179 residues: MAELATIARPYAEALFRVAEGGDIAAWSTLVQELAQVARLPEVLSVASSPKVTRTQVAELLLAAVKSPLGAGAEAKNFVQMLVDNHRIALLPEIAEQFEALKNEREGAADAEIVSAFPLNGADLESLVSGLERKFKRKLKPTVAVDSSLIGGVRVTVGDEVLDTSVRARLASMQAALTA.

The protein belongs to the ATPase delta chain family. As to quaternary structure, F-type ATPases have 2 components, F(1) - the catalytic core - and F(0) - the membrane proton channel. F(1) has five subunits: alpha(3), beta(3), gamma(1), delta(1), epsilon(1). F(0) has three main subunits: a(1), b(2) and c(10-14). The alpha and beta chains form an alternating ring which encloses part of the gamma chain. F(1) is attached to F(0) by a central stalk formed by the gamma and epsilon chains, while a peripheral stalk is formed by the delta and b chains.

It localises to the cell inner membrane. Functionally, f(1)F(0) ATP synthase produces ATP from ADP in the presence of a proton or sodium gradient. F-type ATPases consist of two structural domains, F(1) containing the extramembraneous catalytic core and F(0) containing the membrane proton channel, linked together by a central stalk and a peripheral stalk. During catalysis, ATP synthesis in the catalytic domain of F(1) is coupled via a rotary mechanism of the central stalk subunits to proton translocation. Its function is as follows. This protein is part of the stalk that links CF(0) to CF(1). It either transmits conformational changes from CF(0) to CF(1) or is implicated in proton conduction. The sequence is that of ATP synthase subunit delta from Burkholderia lata (strain ATCC 17760 / DSM 23089 / LMG 22485 / NCIMB 9086 / R18194 / 383).